Consider the following 162-residue polypeptide: MVDPARARKLAKRIGTIVATAIDHEIKDPRLAFVTITDTKVTADLHDATVYYTVMGADLESEPDLVSAAAGLEKAKGVLRSKVGAGTGVRFTPTLTFVADTVPDTARHMEELLARARAADDEVARVAAGASPAGDPDPYKEPRVEDADDAEVDEPSRSRQAD.

Residues 123 to 162 (VARVAAGASPAGDPDPYKEPRVEDADDAEVDEPSRSRQAD) form a disordered region. Residues 125–136 (RVAAGASPAGDP) show a composition bias toward low complexity.

The protein belongs to the RbfA family. As to quaternary structure, monomer. Binds 30S ribosomal subunits, but not 50S ribosomal subunits or 70S ribosomes.

Its subcellular location is the cytoplasm. One of several proteins that assist in the late maturation steps of the functional core of the 30S ribosomal subunit. Associates with free 30S ribosomal subunits (but not with 30S subunits that are part of 70S ribosomes or polysomes). Required for efficient processing of 16S rRNA. May interact with the 5'-terminal helix region of 16S rRNA. The sequence is that of Ribosome-binding factor A from Rhodococcus opacus (strain B4).